Consider the following 168-residue polypeptide: Probable acetolactate synthase small subunit (168 aa).

Residues 10–84 (IISALVEHKP…DVIKVRDLEP (75 aa)) enclose the ACT domain.

This sequence belongs to the acetolactate synthase small subunit family. Dimer of large and small chains.

The enzyme catalyses 2 pyruvate + H(+) = (2S)-2-acetolactate + CO2. It functions in the pathway amino-acid biosynthesis; L-isoleucine biosynthesis; L-isoleucine from 2-oxobutanoate: step 1/4. It participates in amino-acid biosynthesis; L-valine biosynthesis; L-valine from pyruvate: step 1/4. The chain is Probable acetolactate synthase small subunit (ilvH) from Methanothermobacter thermautotrophicus (strain ATCC 29096 / DSM 1053 / JCM 10044 / NBRC 100330 / Delta H) (Methanobacterium thermoautotrophicum).